The chain runs to 279 residues: 5'-nucleotidase SurE 1 (279 aa).

Residues D12, D13, S45, and N103 each contribute to the a divalent metal cation site.

It belongs to the SurE nucleotidase family. A divalent metal cation is required as a cofactor.

The protein resides in the cytoplasm. The catalysed reaction is a ribonucleoside 5'-phosphate + H2O = a ribonucleoside + phosphate. Functionally, nucleotidase that shows phosphatase activity on nucleoside 5'-monophosphates. This chain is 5'-nucleotidase SurE 1, found in Chlamydia caviae (strain ATCC VR-813 / DSM 19441 / 03DC25 / GPIC) (Chlamydophila caviae).